The following is a 127-amino-acid chain: Small integral membrane protein 33 (127 aa).

N15 carries N-linked (GlcNAc...) asparagine glycosylation. Residues 38-58 (PLLAAIIAAFVLLAICIVLAV) form a helical membrane-spanning segment.

The protein localises to the membrane. The polypeptide is Small integral membrane protein 33 (Mus musculus (Mouse)).